The primary structure comprises 522 residues: Sensory neuron membrane protein 1 (522 aa).

Topologically, residues Met-1–Ala-11 are cytoplasmic. Residues Ile-12–Leu-32 form a helical membrane-spanning segment. Over Lys-33–Val-458 the chain is Extracellular. Residues Asn-67, Asn-105, and Asn-229 are each glycosylated (N-linked (GlcNAc...) asparagine). 3 disulfides stabilise this stretch: Cys-268/Cys-333, Cys-297/Cys-352, and Cys-335/Cys-341. A glycan (N-linked (GlcNAc...) asparagine) is linked at Asn-440. A helical transmembrane segment spans residues Ser-459–Phe-479. The Cytoplasmic segment spans residues His-480–Met-522. Positions Lys-500 to Met-522 are disordered. The segment covering Gly-513–Met-522 has biased composition (polar residues).

Belongs to the CD36 family. Principal component of the olfactory cilia membrane. Detected in both male and female antennae but not present in leg, abdomen, thorax or head.

Its subcellular location is the cell membrane. Plays an olfactory role that is not restricted to pheromone sensitivity. This Bombyx mori (Silk moth) protein is Sensory neuron membrane protein 1.